We begin with the raw amino-acid sequence, 41 residues long: Chymotrypsin inhibitor (41 aa).

Inhibits chymotrypsin. This is Chymotrypsin inhibitor from Eisenia hortensis (European nightcrawler).